Here is a 351-residue protein sequence, read N- to C-terminus: Divinyl chlorophyll a/b light-harvesting protein PcbC (351 aa).

Helical transmembrane passes span 27-47 (FIAA…AFTL), 64-84 (LICL…GVIT), 89-109 (CTVI…GGLL), 203-223 (VMGG…FHIA), 244-264 (VLSY…FWCA), and 306-326 (LSNV…WHAL).

The protein belongs to the PsbB/PsbC family. IsiA/Pcb subfamily. As to quaternary structure, the antenna complex consists of divinyl chlorophylls (a and b) and divinyl chlorophyll a/b binding proteins and binds more divinyl chlorophyll b than does the antenna complex from high-light-adapted Prochlorococcus. It depends on divinyl chlorophyll a as a cofactor. Requires divinyl chlorophyll b as cofactor.

The protein resides in the cellular thylakoid membrane. Its function is as follows. The antenna complex functions as a light receptor, it captures and delivers excitation energy to photosystems II and I. The Prochlorales pcb genes are not related to higher plant LHCs. This is Divinyl chlorophyll a/b light-harvesting protein PcbC (pcbC) from Prochlorococcus marinus (strain SARG / CCMP1375 / SS120).